Here is an 87-residue protein sequence, read N- to C-terminus: Large ribosomal subunit protein bL27 (87 aa).

The protein belongs to the bacterial ribosomal protein bL27 family.

The chain is Large ribosomal subunit protein bL27 from Dichelobacter nodosus (strain VCS1703A).